The following is a 143-amino-acid chain: S-protein homolog 11 (143 aa).

A signal peptide spans M1–A20.

Belongs to the plant self-incompatibility (S1) protein family.

The protein localises to the secreted. This Arabidopsis thaliana (Mouse-ear cress) protein is S-protein homolog 11.